We begin with the raw amino-acid sequence, 495 residues long: Membrane-bound glycerophospholipid O-acyltransferase 1 (495 aa).

Helical transmembrane passes span 34 to 54, 70 to 90, 126 to 146, 180 to 200, 238 to 258, and 297 to 317; these read VNFV…RIYL, IFGI…LFVL, IYIF…MIVT, PSFL…AGPC, TGAV…FLTL, and YFAW…FSGV. Residues Asn350 and His381 contribute to the active site. The next 3 membrane-spanning stretches (helical) occupy residues 371–391, 426–446, and 450–470; these read VLTF…YFTF, TWAV…MLAV, and ISLY…IILF. Ser488 is subject to Phosphoserine.

It belongs to the membrane-bound acyltransferase family. Expressed in neutrophils.

It localises to the endoplasmic reticulum membrane. The catalysed reaction is a 1-acyl-sn-glycero-3-phospho-L-serine + an acyl-CoA = a 1,2-diacyl-sn-glycero-3-phospho-L-serine + CoA. The enzyme catalyses a 1-acyl-sn-glycero-3-phosphocholine + an acyl-CoA = a 1,2-diacyl-sn-glycero-3-phosphocholine + CoA. It catalyses the reaction a 1-acyl-sn-glycero-3-phosphoethanolamine + an acyl-CoA = a 1,2-diacyl-sn-glycero-3-phosphoethanolamine + CoA. It carries out the reaction 1-(9Z-octadecenoyl)-sn-glycero-3-phospho-L-serine + (9Z)-octadecenoyl-CoA = 1,2-di-(9Z)-octadecenoyl-sn-glycero-3-phospho-L-serine + CoA. The catalysed reaction is 1-(9Z-octadecenoyl)-sn-glycero-3-phospho-L-serine + octadecanoyl-CoA = 1-(9Z-octadecenoyl)-2-octadecanoyl-sn-glycero-3-phospho-L-serine + CoA. The enzyme catalyses 1-(9Z-octadecenoyl)-sn-glycero-3-phospho-L-serine + (9Z)-hexadecenoyl-CoA = 1-(9Z-octadecenoyl)-2-(9Z-hexadecenoyl)-sn-glycero-3-phospho-L-serine + CoA. It catalyses the reaction 1-(9Z-octadecenoyl)-sn-glycero-3-phospho-L-serine + (9Z,12Z)-octadecadienoyl-CoA = 1-(9Z-octadecenoyl)-2-(9Z,12Z-octadienoyl)-sn-glycero-3-phospho-L-serine + CoA. It carries out the reaction 1-hexadecanoyl-sn-glycero-3-phosphocholine + (9Z)-octadecenoyl-CoA = 1-hexadecanoyl-2-(9Z-octadecenoyl)-sn-glycero-3-phosphocholine + CoA. The catalysed reaction is a 1-O-(1Z-alkenyl)-sn-glycero-3-phosphoethanolamine + (9Z)-octadecenoyl-CoA = 1-O-(1Z)-alkenyl-2-(9Z)-octadecenoyl-sn-glycero-3-phosphoethanolamine + CoA. The enzyme catalyses 1-octadecanoyl-sn-glycero-3-phosphoethanolamine + (9Z)-octadecenoyl-CoA = 1-octadecanoyl-2-(9Z-octadecenoyl)-sn-glycero-3-phosphoethanolamine + CoA. It catalyses the reaction 1-(9Z-octadecenoyl)-sn-glycero-3-phosphoethanolamine + (9Z)-octadecenoyl-CoA = 1,2-di-(9Z-octadecenoyl)-sn-glycero-3-phosphoethanolamine + CoA. It carries out the reaction 1-hexadecanoyl-sn-glycero-3-phosphoethanolamine + (9Z)-octadecenoyl-CoA = 1-hexadecanoyl-2-(9Z-octadecenoyl)-sn-glycero-3-phosphoethanolamine + CoA. The catalysed reaction is 1-(10Z-heptadecenoyl)-sn-glycero-3-phosphoethanolamine + hexadecanoyl-CoA = 1-(10Z-heptadecenoyl)-2-hexadecanoyl-sn-glycero-3-phosphoethanolamine + CoA. The enzyme catalyses 1-(10Z-heptadecenoyl)-sn-glycero-3-phosphoethanolamine + (9Z)-octadecenoyl-CoA = 1-(10Z-heptadecenoyl)-2-(9Z-octadecenoyl)-sn-glycero-3-phosphoethanolamine + CoA. Its pathway is lipid metabolism; phospholipid metabolism. Its activity is regulated as follows. Partially inhibited by thimerosal. Functionally, acyltransferase which catalyzes the transfer of an acyl group from an acyl-CoA towards a lysophospholipid producing a phospholipid and participates in the reacylation step of the phospholipid remodeling pathway also known as the Lands cycle. Acts on lysophosphatidylserine (1-acyl-2-hydroxy-sn-glycero-3-phospho-L-serine or LPS) and lysophosphatidylethanolamine (1-acyl-sn-glycero-3-phosphoethanolamine or LPE), and to a lesser extend lysophosphatidylcholine. Prefers oleoyl-CoA as the acyl donor and 1-oleoyl-LPE as acceptor. May play a role in neurite outgrowth during neuronal differentiation. The sequence is that of Membrane-bound glycerophospholipid O-acyltransferase 1 from Homo sapiens (Human).